We begin with the raw amino-acid sequence, 372 residues long: DNA replication and repair protein RecF (372 aa).

An ATP-binding site is contributed by 30 to 37 (GENGQGKT).

Belongs to the RecF family.

The protein resides in the cytoplasm. Functionally, the RecF protein is involved in DNA metabolism; it is required for DNA replication and normal SOS inducibility. RecF binds preferentially to single-stranded, linear DNA. It also seems to bind ATP. This Anaeromyxobacter sp. (strain K) protein is DNA replication and repair protein RecF.